The sequence spans 685 residues: MAEDKSKRDSIEMSMKGCQTNNGFVHNEDILEQTPDPGSSTDNLKHSTRGILGSQEPDFKGVQPYAGMPKEVLFQFSGQARYRIPREILFWLTVASVLVLIAATIAIIALSPKCLDWWQEGPMYQIYPRSFKDSNKDGNGDLKGIQDKLDYITALNIKTVWITSFYKSSLKDFRYGVEDFREVDPIFGTMEDFENLVAAIHDKGLKLIIDFIPNHTSDKHIWFQLSRTRTGKYTDYYIWHDCTHENGKTIPPNNWLSVYGNSSWHFDEVRNQCYFHQFMKEQPDLNFRNPDVQEEIKEILRFWLTKGVDGFSLDAVKFLLEAKHLRDEIQVNKTQIPDTVTQYSELYHDFTTTQVGMHDIVRSFRQTMDQYSTEPGRYRFMGTEAYAESIDRTVMYYGLPFIQEADFPFNNYLSMLDTVSGNSVYEVITSWMENMPEGKWPNWMIGGPDSSRLTSRLGNQYVNVMNMLLFTLPGTPITYYGEEIGMGNIVAANLNESYDINTLRSKSPMQWDNSSNAGFSEASNTWLPTNSDYHTVNVDVQKTQPRSALKLYQDLSLLHANELLLNRGWFCHLRNDSHYVVYTRELDGIDRIFIVVLNFGESTLLNLHNMISGLPAKMRIRLSTNSADKGSKVDTSGIFLDKGEGLIFEHNTKNLLHRQTAFRDRCFVSNRACYSSVLNILYTSC.

Positions 1 to 11 (MAEDKSKRDSI) are enriched in basic and acidic residues. The segment at 1–56 (MAEDKSKRDSIEMSMKGCQTNNGFVHNEDILEQTPDPGSSTDNLKHSTRGILGSQE) is disordered. Residues 1 to 87 (MAEDKSKRDS…GQARYRIPRE (87 aa)) are Cytoplasmic-facing. A Phosphoserine modification is found at Ser10. The chain crosses the membrane as a helical; Signal-anchor for type II membrane protein span at residues 88 to 108 (ILFWLTVASVLVLIAATIAII). At 109-685 (ALSPKCLDWW…SVLNILYTSC (577 aa)) the chain is on the extracellular side. Residue Asn214 coordinates Ca(2+). Asn214 and Asn261 each carry an N-linked (GlcNAc...) asparagine glycan. Residues Cys242 and Cys273 are joined by a disulfide bond. The Ca(2+) site is built by Asp284, Phe318, Leu319, and Glu321. 4 N-linked (GlcNAc...) asparagine glycosylation sites follow: Asn332, Asn495, Asn513, and Asn575. 2 cysteine pairs are disulfide-bonded: Cys571/Cys666 and Cys673/Cys685.

In terms of assembly, disulfide-linked heterodimer composed of the catalytic light subunit SLC7A9 and the heavy subunit SLC3A1. The heterodimer is the minimal functional unit. Assembles in non-covalently linked heterotetramers (dimers of heterodimers) and higher order oligomers; the oligomerization is mediated by SLC3A1 likely to prevent degradation in the endoplasmic reticulum and facilitate heteromer trafficking to the plasma membrane. Disulfide-linked heterodimer composed of the catalytic light subunit SLC7A13 and the heavy subunit SLC3A1. Expressed in the brush border membrane in the kidney (at protein level). Predominantly expressed in the kidney, small intestine and pancreas. Weakly expressed in liver.

It is found in the cell membrane. The protein resides in the apical cell membrane. Acts as a chaperone that facilitates biogenesis and trafficking of functional transporter heteromers to the plasma membrane. Associates with SLC7A9 to form a functional transporter complex that mediates the electrogenic exchange between cationic amino acids and neutral amino acids, with a stoichiometry of 1:1. SLC7A9-SLC3A1 transporter has system b(0,+)-like activity with high affinity for extracellular cationic amino acids and L-cystine and lower affinity for intracellular neutral amino acids. Substrate exchange is driven by high concentration of intracellular neutral amino acids and the intracellular reduction of L-cystine to L-cysteine. SLC7A9-SLC3A1 acts as a major transporter for reabsorption of L-cystine and dibasic amino acids across the brush border membrane in early proximal tubules. Associates with SLC7A13 to form a functional complex that transports anionic and neutral amino acids via exchange or facilitated diffusion. SLC7A13-SLC3A1 may act as a major transporter for L-cystine in late proximal tubules, ensuring its reabsorption from the luminal fluid in exchange for cytosolic L-glutamate or L-aspartate. The chain is Amino acid transporter heavy chain SLC3A1 from Homo sapiens (Human).